The following is a 245-amino-acid chain: tRNA pseudouridine synthase A (245 aa).

Residue Asp52 is the Nucleophile of the active site. Tyr110 lines the substrate pocket.

The protein belongs to the tRNA pseudouridine synthase TruA family. In terms of assembly, homodimer.

The enzyme catalyses uridine(38/39/40) in tRNA = pseudouridine(38/39/40) in tRNA. Its function is as follows. Formation of pseudouridine at positions 38, 39 and 40 in the anticodon stem and loop of transfer RNAs. The sequence is that of tRNA pseudouridine synthase A from Borrelia hermsii (strain HS1 / DAH).